The primary structure comprises 444 residues: Argininosuccinate synthase (444 aa).

ATP-binding positions include 18–26 (AFSGGLDTS) and Ala-44. Position 100 (Tyr-100) interacts with L-citrulline. ATP contacts are provided by Gly-130 and Thr-132. Residues Thr-132, Asn-136, and Asp-137 each coordinate L-aspartate. Residue Asn-136 participates in L-citrulline binding. Residue Asp-137 coordinates ATP. 2 residues coordinate L-citrulline: Arg-140 and Ser-193. Asp-195 contributes to the ATP binding site. L-citrulline-binding residues include Thr-202, Glu-204, and Glu-281.

Belongs to the argininosuccinate synthase family. Type 2 subfamily. In terms of assembly, homotetramer.

The protein localises to the cytoplasm. It carries out the reaction L-citrulline + L-aspartate + ATP = 2-(N(omega)-L-arginino)succinate + AMP + diphosphate + H(+). The protein operates within amino-acid biosynthesis; L-arginine biosynthesis; L-arginine from L-ornithine and carbamoyl phosphate: step 2/3. The protein is Argininosuccinate synthase of Actinobacillus succinogenes (strain ATCC 55618 / DSM 22257 / CCUG 43843 / 130Z).